We begin with the raw amino-acid sequence, 394 residues long: Anthocyanidin 3-O-glucosyltransferase 6 (394 aa).

The Charge relay role is filled by Asp37. Residues Thr59, Ala267, Gln269, His284, Trp287, Asn288, Ser289, and Glu292 each coordinate UDP-alpha-D-glucose. Ala307 is an an anthocyanidin binding site. UDP-alpha-D-glucose is bound by residues Glu308 and Gln309.

This sequence belongs to the UDP-glycosyltransferase family. As to expression, expressed in cotyledons and leaves.

It catalyses the reaction an anthocyanidin + UDP-alpha-D-glucose + H(+) = an anthocyanidin 3-O-beta-D-glucoside + UDP. Its pathway is pigment biosynthesis; anthocyanin biosynthesis. In terms of biological role, in the presence of other necessary color factors, this glycosylation reaction allows the accumulation of anthocyanin pigments. May be involved in glycosylation of unstable cyanohydrins to produce stable cyanoglucosides. In Manihot esculenta (Cassava), this protein is Anthocyanidin 3-O-glucosyltransferase 6 (GT6).